The primary structure comprises 209 residues: Virulence factors putative positive transcription regulator BvgA (209 aa).

Positions K4 to M119 constitute a Response regulatory domain. D54 is modified (4-aspartylphosphate). In terms of domain architecture, HTH luxR-type spans D142–N207. A DNA-binding region (H-T-H motif) is located at residues N166–T185.

As to quaternary structure, homodimer. In terms of processing, phosphorylated by BvgS.

Functionally, member of the two-component regulatory system BvgS/BvgA. Activates the transcription of virulence genes. The protein is Virulence factors putative positive transcription regulator BvgA (bvgA) of Bordetella bronchiseptica (strain ATCC BAA-588 / NCTC 13252 / RB50) (Alcaligenes bronchisepticus).